The sequence spans 217 residues: Magnetosome protein MamA (217 aa).

TPR repeat units follow at residues 12–44 (VTLY…NDDI), 46–79 (QVYY…DAFD), 80–113 (VDVA…APDN), 114–147 (VKVA…NPIN), 148–181 (FNVR…RPNE), and 182–215 (GKVH…DEGA). Residues 41-112 (NDDIRQVYYR…LERSLADAPD (72 aa)) form an N-terminal domain (NTD) region. The tract at residues 113-217 (NVKVATVLGL…ANELDEGASV (105 aa)) is C-terminal domain (CTD).

It belongs to the magnetosome MamA family. Oligomerizes into high molecular weight complexes (at least 560 kDa). Forms round, 20 nm diameter complexes with a central cavity. Interacts with full-length Mms6. Probably binds MamC.

It localises to the magnetosome membrane. In terms of biological role, probably forms a large homooligomer on which other magnetosome subunits assemble. Required for formation of functional magnetosomes from pre-existing vesicles, it has a dynamic location in the cell. In Paramagnetospirillum magneticum (strain ATCC 700264 / AMB-1) (Magnetospirillum magneticum), this protein is Magnetosome protein MamA.